The primary structure comprises 115 residues: Large ribosomal subunit protein bL20c (115 aa).

This sequence belongs to the bacterial ribosomal protein bL20 family.

The protein resides in the plastid. It localises to the chloroplast. Its function is as follows. Binds directly to 23S ribosomal RNA and is necessary for the in vitro assembly process of the 50S ribosomal subunit. It is not involved in the protein synthesizing functions of that subunit. This is Large ribosomal subunit protein bL20c from Chlorokybus atmophyticus (Soil alga).